We begin with the raw amino-acid sequence, 383 residues long: D-aspartate oxidase 3 (383 aa).

The N-terminal stretch at 1-17 (MLYALLLLFGGVSTVSS) is a signal peptide. FAD is bound by residues lysine 56 and serine 63. N-linked (GlcNAc...) asparagine glycans are attached at residues asparagine 152, asparagine 271, and asparagine 320. Residue threonine 339 coordinates FAD. The N-linked (GlcNAc...) asparagine glycan is linked to asparagine 371.

It belongs to the DAMOX/DASOX family. Requires FAD as cofactor. In both sexes, present in coelomocytes (at protein level). Expressed in hypodermal cells and the proximal gonadal sheath cells in adult hermaphrodites (at protein level). Also expressed in probable head mesodermal cells and unidentified cells in the head, and vulval muscles in adult hermaphrodites. Expressed in the seminal vesicle, spicule and tail cells in adult males (at protein level).

It is found in the secreted. The enzyme catalyses D-aspartate + O2 + H2O = oxaloacetate + H2O2 + NH4(+). The catalysed reaction is D-glutamate + O2 + H2O = H2O2 + 2-oxoglutarate + NH4(+). Its function is as follows. Selectively catalyzes the oxidative deamination of acidic amino acids. Plays a role in the egg-laying events and maturation processes of the reproductive organs. In Caenorhabditis elegans, this protein is D-aspartate oxidase 3 (ddo-3).